A 147-amino-acid chain; its full sequence is Phosphoribosyl-AMP cyclohydrolase (147 aa).

Residue Asp97 participates in Mg(2+) binding. Residue Cys98 participates in Zn(2+) binding. Mg(2+)-binding residues include Asp99 and Asp101. Cys114 and Cys121 together coordinate Zn(2+).

It belongs to the PRA-CH family. As to quaternary structure, homodimer. It depends on Mg(2+) as a cofactor. Zn(2+) is required as a cofactor.

The protein resides in the cytoplasm. It catalyses the reaction 1-(5-phospho-beta-D-ribosyl)-5'-AMP + H2O = 1-(5-phospho-beta-D-ribosyl)-5-[(5-phospho-beta-D-ribosylamino)methylideneamino]imidazole-4-carboxamide. Its pathway is amino-acid biosynthesis; L-histidine biosynthesis; L-histidine from 5-phospho-alpha-D-ribose 1-diphosphate: step 3/9. In terms of biological role, catalyzes the hydrolysis of the adenine ring of phosphoribosyl-AMP. This chain is Phosphoribosyl-AMP cyclohydrolase, found in Hydrogenovibrio crunogenus (strain DSM 25203 / XCL-2) (Thiomicrospira crunogena).